The primary structure comprises 202 residues: T-cell surface glycoprotein CD3 epsilon chain (202 aa).

The first 21 residues, 1 to 21 (MPSGSLWRVLGLCLLSVGAWG), serve as a signal peptide directing secretion. The Extracellular segment spans residues 22–125 (QEDNEDPLEP…NCVEVDTMTA (104 aa)). One can recognise an Ig-like domain in the interval 33–107 (PQTSASARYK…TSNSLEKNYL (75 aa)). The cysteines at positions 54 and 96 are disulfide-linked. The chain crosses the membrane as a helical span at residues 126–146 (VAIVVADVCITLGFLLLVYYW). The Cytoplasmic segment spans residues 147 to 202 (SKNKKASSVTMMRGPGAGGRPRGQNKEKPPPVPNPDYEPIRKGQQDLYSGLNQRGI). Residues 156-202 (TMMRGPGAGGRPRGQNKEKPPPVPNPDYEPIRKGQQDLYSGLNQRGI) are disordered. The segment at 170-187 (QNKEKPPPVPNPDYEPIR) is NUMB-binding region. In terms of domain architecture, ITAM spans 173 to 200 (EKPPPVPNPDYEPIRKGQQDLYSGLNQR). Residues 174–181 (KPPPVPNP) are proline-rich sequence. Tyr-183 and Tyr-194 each carry phosphotyrosine. A compositionally biased stretch (polar residues) spans 192–202 (DLYSGLNQRGI).

In terms of assembly, the TCR-CD3 complex is composed of a CD3D/CD3E and a CD3G/CD3E heterodimers that preferentially associate with TCRalpha and TCRbeta, respectively, to form TCRalpha/CD3E/CD3G and TCRbeta/CD3G/CD3E trimers. In turn, the hexamer interacts with CD3Z homodimer to form the TCR-CD3 complex. Alternatively, TCRalpha and TCRbeta can be replaced by TCRgamma and TCRdelta. Interacts with CD6. Interacts (via Proline-rich sequence) with NCK1; the interaction is ligand dependent but independent of tyrosine kinase activation. Post-translationally, phosphorylated on Tyr residues after T-cell receptor triggering by LCK in association with CD4/CD8.

It is found in the cell membrane. Its function is as follows. Part of the TCR-CD3 complex present on T-lymphocyte cell surface that plays an essential role in adaptive immune response. When antigen presenting cells (APCs) activate T-cell receptor (TCR), TCR-mediated signals are transmitted across the cell membrane by the CD3 chains CD3D, CD3E, CD3G and CD3Z. All CD3 chains contain immunoreceptor tyrosine-based activation motifs (ITAMs) in their cytoplasmic domain. Upon TCR engagement, these motifs become phosphorylated by Src family protein tyrosine kinases LCK and FYN, resulting in the activation of downstream signaling pathways. In addition of this role of signal transduction in T-cell activation, CD3E plays an essential role in correct T-cell development. Also participates in internalization and cell surface down-regulation of TCR-CD3 complexes via endocytosis sequences present in CD3E cytosolic region. In addition to its role as a TCR coreceptor, it serves as a receptor for ITPRIPL1. Ligand recognition inhibits T-cell activation by promoting interaction with NCK1, which prevents CD3E-ZAP70 interaction and blocks the ERK-NFkB signaling cascade and calcium influx. The protein is T-cell surface glycoprotein CD3 epsilon chain (CD3E) of Felis catus (Cat).